A 339-amino-acid chain; its full sequence is Ketol-acid reductoisomerase (NADP(+)) (339 aa).

One can recognise a KARI N-terminal Rossmann domain in the interval 1 to 182 (MRVYYDRDAD…GGGRAGIIET (182 aa)). NADP(+) is bound by residues 24-27 (YGSQ), Arg48, Ser51, Ser53, and 83-86 (DELQ). The active site involves His108. Gly134 provides a ligand contact to NADP(+). In terms of domain architecture, KARI C-terminal knotted spans 183–328 (TFKEECETDL…ERLRAMMPWI (146 aa)). Asp191, Glu195, Glu227, and Glu231 together coordinate Mg(2+). Ser252 is a substrate binding site.

Belongs to the ketol-acid reductoisomerase family. Requires Mg(2+) as cofactor.

It catalyses the reaction (2R)-2,3-dihydroxy-3-methylbutanoate + NADP(+) = (2S)-2-acetolactate + NADPH + H(+). It carries out the reaction (2R,3R)-2,3-dihydroxy-3-methylpentanoate + NADP(+) = (S)-2-ethyl-2-hydroxy-3-oxobutanoate + NADPH + H(+). The protein operates within amino-acid biosynthesis; L-isoleucine biosynthesis; L-isoleucine from 2-oxobutanoate: step 2/4. Its pathway is amino-acid biosynthesis; L-valine biosynthesis; L-valine from pyruvate: step 2/4. Its function is as follows. Involved in the biosynthesis of branched-chain amino acids (BCAA). Catalyzes an alkyl-migration followed by a ketol-acid reduction of (S)-2-acetolactate (S2AL) to yield (R)-2,3-dihydroxy-isovalerate. In the isomerase reaction, S2AL is rearranged via a Mg-dependent methyl migration to produce 3-hydroxy-3-methyl-2-ketobutyrate (HMKB). In the reductase reaction, this 2-ketoacid undergoes a metal-dependent reduction by NADPH to yield (R)-2,3-dihydroxy-isovalerate. In Methylobacterium nodulans (strain LMG 21967 / CNCM I-2342 / ORS 2060), this protein is Ketol-acid reductoisomerase (NADP(+)).